A 220-amino-acid chain; its full sequence is uncharacterized protein (220 aa).

The chain crosses the membrane as a helical span at residues Phe-20–Ile-42.

The protein resides in the membrane. This is an uncharacterized protein from Rickettsia prowazekii (strain Madrid E).